The chain runs to 159 residues: Insulin-like peptide 7 (159 aa).

The signal sequence occupies residues 1-31 (MTRMIIQNSGSWTLCGAVLLFVLPLIPTPEA). 3 disulfides stabilise this stretch: Cys63-Cys136, Cys75-Cys150, and Cys135-Cys141. A propeptide spans 90 to 121 (TGNDEAWIKKTTTEPDGSTWLHVNYANMFLRS) (connecting peptide).

This sequence belongs to the insulin family. In terms of assembly, heterodimer of a B chain and an A chain linked by two disulfide bonds. Broadly expressed at a low level throughout the embryo, except the yolk. Expressed at a moderate level in the embryonic midgut. Larval expression is restricted to ten cells of the ventral nerve cord - in four pairs of centrally located cells in the most posterior abdominal segments and in one pair of dorsally located cells in the A1 or A2 segments.

It localises to the secreted. Functionally, possible ligand of InR/insulin-like receptor. The protein is Insulin-like peptide 7 of Drosophila melanogaster (Fruit fly).